Here is a 961-residue protein sequence, read N- to C-terminus: Vitamin B12-dependent ribonucleotide reductase (961 aa).

Residues 1 to 23 form a disordered region; the sequence is MTETTSGPARGSRTKGTKATKGL. Residues serine 143, 159 to 160, glycine 188, 364 to 368, and 554 to 558 each bind substrate; these read AC, NPCSE, and PTGTI. Cysteine 160 and cysteine 377 are joined by a disulfide. Catalysis depends on asparagine 364, which acts as the Proton acceptor. The Cysteine radical intermediate role is filled by cysteine 366. Glutamate 368 functions as the Proton acceptor in the catalytic mechanism.

The protein belongs to the ribonucleoside diphosphate reductase class-2 family. In terms of assembly, homotetramer. Adenosylcob(III)alamin serves as cofactor.

It catalyses the reaction a 2'-deoxyribonucleoside 5'-diphosphate + [thioredoxin]-disulfide + H2O = a ribonucleoside 5'-diphosphate + [thioredoxin]-dithiol. In terms of biological role, catalyzes the reduction of ribonucleotides to deoxyribonucleotides. May function to provide a pool of deoxyribonucleotide precursors for DNA repair during oxygen limitation and/or for immediate growth after restoration of oxygen. The chain is Vitamin B12-dependent ribonucleotide reductase (nrdJ) from Streptomyces clavuligerus.